Consider the following 72-residue polypeptide: Translation initiation factor IF-1 2 (72 aa).

In terms of domain architecture, S1-like spans 1-72 (MAKEELIEFE…TKGRINYRHK (72 aa)).

The protein belongs to the IF-1 family. Component of the 30S ribosomal translation pre-initiation complex which assembles on the 30S ribosome in the order IF-2 and IF-3, IF-1 and N-formylmethionyl-tRNA(fMet); mRNA recruitment can occur at any time during PIC assembly.

The protein localises to the cytoplasm. Functionally, one of the essential components for the initiation of protein synthesis. Stabilizes the binding of IF-2 and IF-3 on the 30S subunit to which N-formylmethionyl-tRNA(fMet) subsequently binds. Helps modulate mRNA selection, yielding the 30S pre-initiation complex (PIC). Upon addition of the 50S ribosomal subunit IF-1, IF-2 and IF-3 are released leaving the mature 70S translation initiation complex. This chain is Translation initiation factor IF-1 2, found in Ralstonia nicotianae (strain ATCC BAA-1114 / GMI1000) (Ralstonia solanacearum).